Here is a 251-residue protein sequence, read N- to C-terminus: 5'-nucleotidase SurE (251 aa).

A divalent metal cation-binding residues include Asp8, Asp9, Ser39, and Asn90.

It belongs to the SurE nucleotidase family. A divalent metal cation serves as cofactor.

Its subcellular location is the cytoplasm. The enzyme catalyses a ribonucleoside 5'-phosphate + H2O = a ribonucleoside + phosphate. Functionally, nucleotidase that shows phosphatase activity on nucleoside 5'-monophosphates. The protein is 5'-nucleotidase SurE of Legionella pneumophila subsp. pneumophila (strain Philadelphia 1 / ATCC 33152 / DSM 7513).